Consider the following 318-residue polypeptide: NADH-ubiquinone oxidoreductase chain 1 (318 aa).

8 helical membrane passes run Leu-3 to Leu-23, Met-69 to Leu-89, Met-102 to Ala-122, Val-144 to Ser-164, Tyr-171 to Ala-191, Leu-222 to Phe-242, Glu-253 to Ile-273, and Leu-294 to Ile-314.

The protein belongs to the complex I subunit 1 family. As to quaternary structure, core subunit of respiratory chain NADH dehydrogenase (Complex I) which is composed of 45 different subunits.

It localises to the mitochondrion inner membrane. It carries out the reaction a ubiquinone + NADH + 5 H(+)(in) = a ubiquinol + NAD(+) + 4 H(+)(out). Functionally, core subunit of the mitochondrial membrane respiratory chain NADH dehydrogenase (Complex I) which catalyzes electron transfer from NADH through the respiratory chain, using ubiquinone as an electron acceptor. Essential for the catalytic activity and assembly of complex I. In Murina florium (Flores tube-nosed bat), this protein is NADH-ubiquinone oxidoreductase chain 1 (MT-ND1).